The chain runs to 74 residues: Toxin Td6 (74 aa).

Positions 1 to 8 (IGMIVECE) are cleaved as a signal peptide. An LCN-type CS-alpha/beta domain is found at 9–71 (KEGYLMEANG…IWDSATNTCG (63 aa)). 4 cysteine pairs are disulfide-bonded: Cys19–Cys70, Cys23–Cys45, Cys31–Cys51, and Cys35–Cys53. Arg72 carries the arginine amide modification.

The protein belongs to the long (4 C-C) scorpion toxin superfamily. Sodium channel inhibitor family. Beta subfamily. In terms of tissue distribution, expressed by the venom gland.

The protein resides in the secreted. Beta toxins bind voltage-independently at site-4 of sodium channels (Nav) and shift the voltage of activation toward more negative potentials thereby affecting sodium channel activation and promoting spontaneous and repetitive firing. In Tityus discrepans (Venezuelan scorpion), this protein is Toxin Td6.